A 243-amino-acid chain; its full sequence is 2-C-methyl-D-erythritol 4-phosphate cytidylyltransferase (243 aa).

This sequence belongs to the IspD/TarI cytidylyltransferase family. IspD subfamily. Homodimer.

It carries out the reaction 2-C-methyl-D-erythritol 4-phosphate + CTP + H(+) = 4-CDP-2-C-methyl-D-erythritol + diphosphate. Its pathway is isoprenoid biosynthesis; isopentenyl diphosphate biosynthesis via DXP pathway; isopentenyl diphosphate from 1-deoxy-D-xylulose 5-phosphate: step 2/6. Functionally, catalyzes the formation of 4-diphosphocytidyl-2-C-methyl-D-erythritol from CTP and 2-C-methyl-D-erythritol 4-phosphate (MEP). This Photorhabdus laumondii subsp. laumondii (strain DSM 15139 / CIP 105565 / TT01) (Photorhabdus luminescens subsp. laumondii) protein is 2-C-methyl-D-erythritol 4-phosphate cytidylyltransferase.